Consider the following 383-residue polypeptide: Teichoic acid glycerol-phosphate primase (383 aa).

This sequence belongs to the CDP-glycerol glycerophosphotransferase family.

The protein resides in the cell membrane. It catalyses the reaction N-acetyl-beta-D-mannosaminyl-(1-&gt;4)-N-acetyl-alpha-D-glucosaminyl di-trans,octa-cis-undecaprenyl diphosphate + CDP-glycerol = 4-O-[(2R)-glycerylphospho]-N-acetyl-beta-D-mannosaminyl-(1-&gt;4)-N-acetyl-alpha-D-glucosaminyl di-trans,octa-cis-undecaprenyl diphosphate + CMP + H(+). It participates in cell wall biogenesis; poly(ribitol phosphate) teichoic acid biosynthesis. In terms of biological role, catalyzes the addition of a single glycerol phosphate residue to the prenoldiphosphate-linked disaccharide. The chain is Teichoic acid glycerol-phosphate primase (tarB) from Bacillus spizizenii (strain ATCC 23059 / NRRL B-14472 / W23) (Bacillus subtilis subsp. spizizenii).